Consider the following 70-residue polypeptide: Large ribosomal subunit protein bL31 (70 aa).

Residues Cys-16, Cys-18, Cys-37, and Cys-40 each coordinate Zn(2+).

It belongs to the bacterial ribosomal protein bL31 family. Type A subfamily. As to quaternary structure, part of the 50S ribosomal subunit. Zn(2+) serves as cofactor.

Functionally, binds the 23S rRNA. The sequence is that of Large ribosomal subunit protein bL31 from Ectopseudomonas mendocina (strain ymp) (Pseudomonas mendocina).